The sequence spans 75 residues: Translation initiation factor IF-1 (75 aa).

Residues 1-72 form the S1-like domain; the sequence is MSKQDLIEME…TKGRITYRLK (72 aa).

This sequence belongs to the IF-1 family. In terms of assembly, component of the 30S ribosomal translation pre-initiation complex which assembles on the 30S ribosome in the order IF-2 and IF-3, IF-1 and N-formylmethionyl-tRNA(fMet); mRNA recruitment can occur at any time during PIC assembly.

It is found in the cytoplasm. One of the essential components for the initiation of protein synthesis. Stabilizes the binding of IF-2 and IF-3 on the 30S subunit to which N-formylmethionyl-tRNA(fMet) subsequently binds. Helps modulate mRNA selection, yielding the 30S pre-initiation complex (PIC). Upon addition of the 50S ribosomal subunit IF-1, IF-2 and IF-3 are released leaving the mature 70S translation initiation complex. The chain is Translation initiation factor IF-1 from Synechocystis sp. (strain ATCC 27184 / PCC 6803 / Kazusa).